A 282-amino-acid chain; its full sequence is Large ribosomal subunit protein uL2 (282 aa).

Disordered regions lie at residues 26–55 (KKSPEKSLLESQSHTAGRNNYGRMTVRHRG) and 218–266 (PHVR…HNKS). Residues 34–43 (LESQSHTAGR) show a composition bias toward polar residues. A compositionally biased stretch (basic residues) spans 254–266 (TIGKKTRNKHNKS).

It belongs to the universal ribosomal protein uL2 family. In terms of assembly, part of the 50S ribosomal subunit. Forms a bridge to the 30S subunit in the 70S ribosome.

One of the primary rRNA binding proteins. Required for association of the 30S and 50S subunits to form the 70S ribosome, for tRNA binding and peptide bond formation. It has been suggested to have peptidyltransferase activity; this is somewhat controversial. Makes several contacts with the 16S rRNA in the 70S ribosome. This Pediococcus pentosaceus (strain ATCC 25745 / CCUG 21536 / LMG 10740 / 183-1w) protein is Large ribosomal subunit protein uL2.